Consider the following 298-residue polypeptide: Protein REVEILLE 8 (298 aa).

The segment at 1–44 (MSSSPSRNPTNAEAPPPPPTSTDAVAEGSSKKVRKPYTITKSRE) is disordered. The HTH myb-type domain occupies 38-92 (TITKSRESWTEEEHDKFLEALQLFDRDWKKIEDFVGSKTVIQIRSHAQKYFLKVQ). A DNA-binding region (H-T-H motif) is located at residues 65–88 (WKKIEDFVGSKTVIQIRSHAQKYF). The segment at 96-123 (TLAHVPPPRPKRKAAHPYPQKASKNAQM) is disordered.

It is found in the nucleus. Transcriptional activator of evening element (EE)-containing clock-controlled genes. Forms a negative feedback loop with APRR5. Regulates the pattern of histone H3 acetylation of the TOC1 promoter. RVE4, RVE6 and RVE8 are components of the circadian system acting synergistically to regulate flowering time, redundantly to regulate leaf growth, and antagonistically to regulate hypocotyl elongation; their action seems independent of ZTL and HY5. This is Protein REVEILLE 8 from Arabidopsis thaliana (Mouse-ear cress).